A 226-amino-acid chain; its full sequence is Transcriptional regulatory protein CitT (226 aa).

Positions His3–Lys119 constitute a Response regulatory domain. Position 54 is a 4-aspartylphosphate (Asp54). Residues Ala178–Glu197 constitute a DNA-binding region (H-T-H motif).

Phosphorylated by CitS.

It localises to the cytoplasm. Its function is as follows. Member of the two-component regulatory system CitT/CitS. Regulates the expression of the citM-yflN operon. Phosphorylated CitT binds to the citM promoter to activate the transcription of the citM-yflN operon. The protein is Transcriptional regulatory protein CitT (citT) of Bacillus subtilis (strain 168).